A 211-amino-acid polypeptide reads, in one-letter code: Proteasome subunit beta (211 aa).

Positions 1 to 9 (MDNDKYLKG) are cleaved as a propeptide — removed in mature form; by autocatalysis. Residue T10 is the Nucleophile of the active site.

It belongs to the peptidase T1B family. As to quaternary structure, the 20S proteasome core is composed of 14 alpha and 14 beta subunits that assemble into four stacked heptameric rings, resulting in a barrel-shaped structure. The two inner rings, each composed of seven catalytic beta subunits, are sandwiched by two outer rings, each composed of seven alpha subunits. The catalytic chamber with the active sites is on the inside of the barrel. Has a gated structure, the ends of the cylinder being occluded by the N-termini of the alpha-subunits. Is capped at one or both ends by the proteasome regulatory ATPase, PAN.

Its subcellular location is the cytoplasm. It carries out the reaction Cleavage of peptide bonds with very broad specificity.. With respect to regulation, the formation of the proteasomal ATPase PAN-20S proteasome complex, via the docking of the C-termini of PAN into the intersubunit pockets in the alpha-rings, triggers opening of the gate for substrate entry. Interconversion between the open-gate and close-gate conformations leads to a dynamic regulation of the 20S proteasome proteolysis activity. Component of the proteasome core, a large protease complex with broad specificity involved in protein degradation. This chain is Proteasome subunit beta, found in Methanosarcina barkeri (strain Fusaro / DSM 804).